We begin with the raw amino-acid sequence, 180 residues long: O-acetyl-ADP-ribose deacetylase (180 aa).

The 175-residue stretch at 1 to 175 (MKPQIEVVVG…LYQRLLIQRG (175 aa)) folds into the Macro domain. Substrate is bound by residues 11–12 (DI), N25, 33–35 (GVD), and 122–126 (STGVY). Residue D35 is the Proton acceptor of the active site.

This sequence belongs to the MacroD-type family. YmdB subfamily. As to quaternary structure, homodimer. Interacts with RNase III.

The enzyme catalyses 3''-O-acetyl-ADP-D-ribose + H2O = ADP-D-ribose + acetate + H(+). It carries out the reaction 2''-O-acetyl-ADP-D-ribose + H2O = ADP-D-ribose + acetate + H(+). Its function is as follows. Deacetylates O-acetyl-ADP ribose to yield ADP-ribose and free acetate. Down-regulates ribonuclease 3 (RNase III) activity. Acts by interacting directly with the region of the ribonuclease that is required for dimerization/activation. In Enterobacter sp. (strain 638), this protein is O-acetyl-ADP-ribose deacetylase.